Reading from the N-terminus, the 485-residue chain is REST corepressor 1 (485 aa).

2 disordered regions span residues 1 to 26 and 49 to 110; these read MPAMVEKGPEVSGKRRGRNNAAASAS and AAAS…VGPQ. Low complexity-rich tracts occupy residues 49-64 and 74-95; these read AAASSASAAAASAAAA and AAAAPNGNSSSNSWEEGSSGSS. The interval 78 to 257 is interaction with HDAC1; it reads PNGNSSSNSW…RHARKQKRER (180 aa). The region spanning 103–189 is the ELM2 domain; it reads GGMRVGPQYQ…KSLADLPNFT (87 aa). A Glycyl lysine isopeptide (Lys-Gly) (interchain with G-Cter in SUMO2) cross-link involves residue K122. Position 127 is a phosphoserine (S127). The region spanning 190 to 241 is the SANT 1 domain; it reads PFPDEWTVEDKVLFEQAFSFHGKTFHRIQQMLPDKSIASLVKFYYSWKKTRT. Positions 244–273 form a coiled coil; the sequence is SVMDRHARKQKREREESEDELEEANGNNPI. The tract at residues 244–314 is disordered; that stretch reads SVMDRHARKQ…AKNRAKRKPP (71 aa). At S260 the chain carries Phosphoserine. A compositionally biased stretch (basic and acidic residues) spans 278 to 288; it reads DQNKESKKEVP. The interaction with KDM1A stretch occupies residues 296–384; that stretch reads VKKEKHSTQA…LPEVIQKCNA (89 aa). K297 is covalently cross-linked (Glycyl lysine isopeptide (Lys-Gly) (interchain with G-Cter in SUMO2)). Residues 334-369 are a coiled coil; sequence ATTVLRQLDMELVSVKRQIQNIKQTNSALKEKLDGG. The SANT 2 domain maps to 381–432; it reads KCNARWTTEEQLLAVQAIRKYGRDFQAISDVIGNKSVVQVKNFFVNYRRRFN. The tract at residues 442 to 485 is disordered; it reads AEHGKEETNGPSNQKPVKSPDNSIKMPEEEDEAPVLDVRYASAS. The span at 450–463 shows a compositional bias: polar residues; sequence NGPSNQKPVKSPDN. S460 is subject to Phosphoserine. K466 is covalently cross-linked (Glycyl lysine isopeptide (Lys-Gly) (interchain with G-Cter in SUMO2)).

It belongs to the CoREST family. As to quaternary structure, interacts directly with GFI1 and GFI1B in a RCOR/GFI/KDM1A/HDAC complex. Interacts with INMS1. Component of a BHC histone deacetylase complex that contains HDAC1, HDAC2, HMG20B/BRAF35, KDM1A, RCOR1/CoREST and PHF21A/BHC80. The BHC complex may also contain ZMYM2, ZNF217, ZMYM3, GSE1 and GTF2I. Interacts with REST. Interacts with the SMARCE1/BAF57, suggesting that the BHC complex may recruit the ATP-dependent chromatin-remodeling SWI-SNF complex. Interacts with SOX2. (Microbial infection) Interacts with herpes virus HSV-1 ICP0 protein; the interaction leads to the disruption of the BHC complex, thereby preventing the BHC complex from repressing transcription of viral genes. In terms of processing, phosphorylated by HSV-1 protein kinases in case of infection. Ubiquitously expressed.

It is found in the nucleus. Functionally, essential component of the BHC complex, a corepressor complex that represses transcription of neuron-specific genes in non-neuronal cells. The BHC complex is recruited at RE1/NRSE sites by REST and acts by deacetylating and demethylating specific sites on histones, thereby acting as a chromatin modifier. In the BHC complex, it serves as a molecular beacon for the recruitment of molecular machinery, including MeCP2 and SUV39H1, that imposes silencing across a chromosomal interval. Plays a central role in demethylation of Lys-4 of histone H3 by promoting demethylase activity of KDM1A on core histones and nucleosomal substrates. It also protects KDM1A from the proteasome. Component of a RCOR/GFI/KDM1A/HDAC complex that suppresses, via histone deacetylase (HDAC) recruitment, a number of genes implicated in multilineage blood cell development and controls hematopoietic differentiation. This is REST corepressor 1 (RCOR1) from Homo sapiens (Human).